A 132-amino-acid chain; its full sequence is SH2 domain-containing protein 1B (132 aa).

The SH2 domain occupies 5–101 (YYHGRLTKQD…GMVVHLLKPI (97 aa)). Tyr-127 bears the Phosphotyrosine mark.

Binds to the phosphorylated receptors CD84, SLAMF1, LY9 and CD244. Does not bind to non-phosphorylated SLAMF1. Interacts with SLAMF7 (via ITSM phosphorylated on 'Tyr-304'). Interacts with Src kinases HCK, LYN, FYN, FGR and LCK (via kinase domains). Interacts (phosphorylated at Tyr-127) with PLCG1.

Cytoplasmic adapter regulating receptors of the signaling lymphocytic activation molecule (SLAM) family such as CD84, SLAMF1, LY9 and CD244. In SLAM signaling seems to cooperate with SH2D1A/SAP. Plays a role in regulation of effector functions of natural killer (NK) cells by controlling signal transduction through CD244/2B4 without effecting its tyrosine phosphorylation; downstream signaling involves PLCG1 and ERK activation. Activation of SLAMF7-mediated NK cell function does not effect receptor tyrosine phosphorylation but distal signaling. In the context of NK cell-mediated cytotoxicity does not enhance conjugate formation with target cells but stimulates polarization of the microtubule-organizing center and cytotoxic granules toward the NK cell synapse. Negatively regulates CD40-induced cytokine production in dendritic cells downstream of SLAM family receptors probably by inducing activation of the PI3K pathway to inhibit p38 MAPK and JNK activation. In Homo sapiens (Human), this protein is SH2 domain-containing protein 1B (SH2D1B).